Here is a 379-residue protein sequence, read N- to C-terminus: Cyclin-dependent kinase-like 4 (379 aa).

The Protein kinase domain occupies 4–286 (YEKLAKTGEG…CSQLLESSYF (283 aa)). Residues 10-18 (TGEGSYGVV) and Lys-33 each bind ATP. Positions 45-51 (KKIALRE) match the [NKR]KIAxRE motif. The active-site Proton acceptor is the Asp-126.

The protein belongs to the protein kinase superfamily. CMGC Ser/Thr protein kinase family. CDC2/CDKX subfamily.

It is found in the cytoplasm. The enzyme catalyses L-seryl-[protein] + ATP = O-phospho-L-seryl-[protein] + ADP + H(+). The catalysed reaction is L-threonyl-[protein] + ATP = O-phospho-L-threonyl-[protein] + ADP + H(+). The chain is Cyclin-dependent kinase-like 4 (CDKL4) from Homo sapiens (Human).